The following is a 1004-amino-acid chain: Centriolar coiled-coil protein of 110 kDa (1004 aa).

The interval 1–221 is CEP97 binding; it reads MEEYEEFCEK…SCLAEVTPDP (221 aa). Residues 51–90 adopt a coiled-coil conformation; that stretch reads EKRKKIQEEKQKALDVQSRKQANRKKALLTRVQEILENVQ. Positions 64 to 82 are calmodulin-binding; that stretch reads LDVQSRKQANRKKALLTRV. Residues 67-82 form a required for interaction with CEP290 region; it reads QSRKQANRKKALLTRV. Disordered regions lie at residues 147-194 and 239-279; these read PVNN…SSAS and RELS…APPM. A Phosphoserine modification is found at S170. A compositionally biased stretch (low complexity) spans 243–252; that stretch reads SRSLRNSLKR. The span at 253–276 shows a compositional bias: basic and acidic residues; the sequence is SVNETHSDRENDAAKASDCVKEKA. The tract at residues 349–564 is interaction with CEP76; sequence ENKVKSLKGP…QTQTSRQQMD (216 aa). Phosphoserine occurs at positions 364, 370, and 398. A disordered region spans residues 401–433; sequence GKEEAVDRTAPAAAETTNESETVPKSPTDLTGV. Over residues 415-433 the composition is skewed to polar residues; the sequence is ETTNESETVPKSPTDLTGV. A Phosphoserine modification is found at S550. Residues 641-699 adopt a coiled-coil conformation; it reads QELLKSKMLAFEEMRKRLEEQHAQQLSLLIAEQEREQEQLQKEIEEQEKMLKEKAVTTD. Calmodulin-binding stretches follow at residues 773-813 and 901-916; these read GRAQ…DKLK and VALS…RKKF. The disordered stretch occupies residues 955–1004; sequence LSRQGTPKTSVKGVVQNRQKPSQSRVPNRAPVSGAYAGKTQRKRPNVATI. Residues 970 to 980 show a composition bias toward polar residues; the sequence is QNRQKPSQSRV. Basic residues predominate over residues 994 to 1004; it reads TQRKRPNVATI.

Interacts with CALM1, CETN2, CEP76, CEP104, CEP290 and TALPID3. Interacts with CEP97. Seems to associate with discrete CETN2, CEP97 and CEP290-containing complexes. Interacts with NEURL4 and CCNF; these interactions are not mutually exclusive and both lead to CCP110 ubiquitination and proteasome-dependent degradation. Via its interaction with NEURL4, may indirectly interact with HERC2. Interacts with KIF24, leading to its recruitment to centrioles. Interacts with USP20 and USP33. Interacts with MPHOSPH9. Interacts (via N-terminal region) with ENKD1 (via central region); ENKD1 competes with CEP97 for binding to CCP110, destabilizing the interaction between CP110 and CEP97 which promotes the removal of CCP110 and CEP97 from the mother centriole and allows the initiation of ciliogenesis. In terms of processing, phosphorylated by CDKs. Ubiquitinated by the SCF(CCNF) during G2 phase, leading to its degradation by the proteasome and preventing centrosome reduplication. Deubiquitinated by USP33 in S and G2/M phase, leading to stabilize CCP110 during the period which centrioles duplicate and elongate. Ubiquitinated by the EDVP complex, leading to its degradation.

The protein resides in the cytoplasm. The protein localises to the cytoskeleton. It is found in the microtubule organizing center. It localises to the centrosome. Its subcellular location is the centriole. The protein resides in the cilium basal body. Its function is as follows. Necessary for centrosome duplication at different stages of procentriole formation. Acts as a key negative regulator of ciliogenesis in collaboration with CEP97 by capping the mother centriole thereby preventing cilia formation. Also involved in promoting ciliogenesis. May play a role in the assembly of the mother centriole subdistal appendages (SDA) thereby effecting the fusion of recycling endosomes to basal bodies during cilia formation. Required for correct spindle formation and has a role in regulating cytokinesis and genome stability via cooperation with CALM1 and CETN2. This Mus musculus (Mouse) protein is Centriolar coiled-coil protein of 110 kDa (Ccp110).